Here is a 196-residue protein sequence, read N- to C-terminus: MIPVVIEQTSRGERSYDIYSRLLKDRIIMLTGQVEDNMANSIIAQLLFLDAQDNTKDIYLYVNTPGGSVSAGLAIVDTMNFIKSDVQTIVMGMAASMGTIIASSGAKGKRFMLPNAEYMIHQPMGGTGGGTQQSDMAIAAEHLLKTRHTLEKILADNSGQSIEKVHDDAERDRWMSAQETLDYGFIDAIMENNNLQ.

Ser96 (nucleophile) is an active-site residue. Residue His121 is part of the active site.

Belongs to the peptidase S14 family. Fourteen ClpP subunits assemble into 2 heptameric rings which stack back to back to give a disk-like structure with a central cavity, resembling the structure of eukaryotic proteasomes.

It localises to the cytoplasm. It carries out the reaction Hydrolysis of proteins to small peptides in the presence of ATP and magnesium. alpha-casein is the usual test substrate. In the absence of ATP, only oligopeptides shorter than five residues are hydrolyzed (such as succinyl-Leu-Tyr-|-NHMec, and Leu-Tyr-Leu-|-Tyr-Trp, in which cleavage of the -Tyr-|-Leu- and -Tyr-|-Trp bonds also occurs).. Its function is as follows. Cleaves peptides in various proteins in a process that requires ATP hydrolysis. Has a chymotrypsin-like activity. Plays a major role in the degradation of misfolded proteins. This is ATP-dependent Clp protease proteolytic subunit from Streptococcus agalactiae serotype III (strain NEM316).